A 330-amino-acid polypeptide reads, in one-letter code: tRNA (cytosine(38)-C(5))-methyltransferase (330 aa).

Residues 7–330 (LRVLELYSGI…ISLLLEPLNF (324 aa)) enclose the SAM-dependent MTase C5-type domain. Cys-81 is an active-site residue.

The protein belongs to the class I-like SAM-binding methyltransferase superfamily. C5-methyltransferase family.

It is found in the cytoplasm. The protein resides in the nucleus. It carries out the reaction cytidine(38) in tRNA + S-adenosyl-L-methionine = 5-methylcytidine(38) in tRNA + S-adenosyl-L-homocysteine + H(+). Functionally, specifically methylates cytosine 38 in the anticodon loop of tRNA(Asp). Can also methylate cytosine 38 in tRNA(Glu), albeit to a lower level, but not tRNA(Lys). Pmt1-dependent tRNA methylation is induced by nitrogen limitation and depends on the nutrient-sensing protein kinase sck2. Does not have DNA-methylation activity. This is tRNA (cytosine(38)-C(5))-methyltransferase (pmt1) from Schizosaccharomyces pombe (strain 972 / ATCC 24843) (Fission yeast).